Consider the following 356-residue polypeptide: Protein-glutamate methylesterase/protein-glutamine glutaminase 2 (356 aa).

In terms of domain architecture, Response regulatory spans 7–124 (KVLCVDDSAL…RDGLMEYTDT (118 aa)). Asp-58 bears the 4-aspartylphosphate mark. The region spanning 157-349 (LLSTEKLIIL…QRVMARLATY (193 aa)) is the CheB-type methylesterase domain. Catalysis depends on residues Ser-169, His-195, and Asp-291.

This sequence belongs to the CheB family. Post-translationally, phosphorylated by CheA. Phosphorylation of the N-terminal regulatory domain activates the methylesterase activity.

The protein resides in the cytoplasm. It carries out the reaction [protein]-L-glutamate 5-O-methyl ester + H2O = L-glutamyl-[protein] + methanol + H(+). It catalyses the reaction L-glutaminyl-[protein] + H2O = L-glutamyl-[protein] + NH4(+). In terms of biological role, involved in chemotaxis. Part of a chemotaxis signal transduction system that modulates chemotaxis in response to various stimuli. Catalyzes the demethylation of specific methylglutamate residues introduced into the chemoreceptors (methyl-accepting chemotaxis proteins or MCP) by CheR. Also mediates the irreversible deamidation of specific glutamine residues to glutamic acid. This is Protein-glutamate methylesterase/protein-glutamine glutaminase 2 from Cupriavidus pinatubonensis (strain JMP 134 / LMG 1197) (Cupriavidus necator (strain JMP 134)).